The sequence spans 395 residues: Protein PELOTA 2 (395 aa).

This sequence belongs to the eukaryotic release factor 1 family. Pelota subfamily. It depends on a divalent metal cation as a cofactor.

The protein localises to the cytoplasm. It is found in the nucleus. In terms of biological role, component of the Pelota-HBS1L complex, a complex that recognizes stalled ribosomes and triggers the No-Go Decay (NGD) pathway. In the Pelota-HBS1L complex, pelo recognizes ribosomes stalled at the 3' end of an mRNA and engages stalled ribosomes by destabilizing mRNA in the mRNA channel. Following ribosome-binding, the Pelota-HBS1L complex promotes the disassembly of stalled ribosomes, followed by degradation of damaged mRNAs as part of the NGD pathway. The protein is Protein PELOTA 2 (PEL2) of Arabidopsis thaliana (Mouse-ear cress).